The sequence spans 175 residues: MALNIFQKQEVVEELAGVATKAHSLIVAEYAGITVSQMTAMRKQARESGVYLKVVKNKLAARALGDTEYAVIKEKLIGPLLYAFSLEDPGAAGRLIKEFSKKHDKLKSKTVSLGGVLYPAGHVDVLASLPTRLQALAMLARVLSEPVTLFARAIKAVADDKSETVAVSAPEASQA.

This sequence belongs to the universal ribosomal protein uL10 family. In terms of assembly, part of the ribosomal stalk of the 50S ribosomal subunit. The N-terminus interacts with L11 and the large rRNA to form the base of the stalk. The C-terminus forms an elongated spine to which L12 dimers bind in a sequential fashion forming a multimeric L10(L12)X complex.

Functionally, forms part of the ribosomal stalk, playing a central role in the interaction of the ribosome with GTP-bound translation factors. The chain is Large ribosomal subunit protein uL10 (rplJ) from Xylella fastidiosa (strain 9a5c).